Consider the following 187-residue polypeptide: Large ribosomal subunit protein uL22 (187 aa).

Over residues 159 to 171 the composition is skewed to basic and acidic residues; it reads VSKPTDDAAPKVK. Residues 159-187 are disordered; that stretch reads VSKPTDDAAPKVKKESKRKQRRQLARGEF. Residues 172–187 are compositionally biased toward basic residues; sequence KESKRKQRRQLARGEF.

The protein belongs to the universal ribosomal protein uL22 family.

This chain is Large ribosomal subunit protein uL22 (rpl-17), found in Caenorhabditis elegans.